The sequence spans 804 residues: Leucine--tRNA ligase (804 aa).

The short motif at 39–50 (PYPSGAGLHVGH) is the 'HIGH' region element. The 'KMSKS' region motif lies at 580 to 584 (KMSKS). Position 583 (Lys-583) interacts with ATP.

This sequence belongs to the class-I aminoacyl-tRNA synthetase family.

It is found in the cytoplasm. The enzyme catalyses tRNA(Leu) + L-leucine + ATP = L-leucyl-tRNA(Leu) + AMP + diphosphate. The protein is Leucine--tRNA ligase of Mycoplasma capricolum subsp. capricolum (strain California kid / ATCC 27343 / NCTC 10154).